Reading from the N-terminus, the 173-residue chain is Adenine phosphoribosyltransferase (173 aa).

Belongs to the purine/pyrimidine phosphoribosyltransferase family. Homodimer.

It is found in the cytoplasm. The enzyme catalyses AMP + diphosphate = 5-phospho-alpha-D-ribose 1-diphosphate + adenine. Its pathway is purine metabolism; AMP biosynthesis via salvage pathway; AMP from adenine: step 1/1. Functionally, catalyzes a salvage reaction resulting in the formation of AMP, that is energically less costly than de novo synthesis. The sequence is that of Adenine phosphoribosyltransferase from Petrotoga mobilis (strain DSM 10674 / SJ95).